A 254-amino-acid polypeptide reads, in one-letter code: Pyridoxine 5'-phosphate synthase (254 aa).

Residue asparagine 12 coordinates 3-amino-2-oxopropyl phosphate. Residue 14-15 (DH) participates in 1-deoxy-D-xylulose 5-phosphate binding. Residue arginine 23 coordinates 3-amino-2-oxopropyl phosphate. Histidine 48 functions as the Proton acceptor in the catalytic mechanism. 1-deoxy-D-xylulose 5-phosphate contacts are provided by arginine 50 and histidine 55. Glutamate 75 functions as the Proton acceptor in the catalytic mechanism. A 1-deoxy-D-xylulose 5-phosphate-binding site is contributed by threonine 105. Residue histidine 199 is the Proton donor of the active site. 3-amino-2-oxopropyl phosphate contacts are provided by residues glycine 200 and 221–222 (GF).

This sequence belongs to the PNP synthase family. In terms of assembly, homooctamer; tetramer of dimers.

The protein resides in the cytoplasm. It carries out the reaction 3-amino-2-oxopropyl phosphate + 1-deoxy-D-xylulose 5-phosphate = pyridoxine 5'-phosphate + phosphate + 2 H2O + H(+). The protein operates within cofactor biosynthesis; pyridoxine 5'-phosphate biosynthesis; pyridoxine 5'-phosphate from D-erythrose 4-phosphate: step 5/5. Its function is as follows. Catalyzes the complicated ring closure reaction between the two acyclic compounds 1-deoxy-D-xylulose-5-phosphate (DXP) and 3-amino-2-oxopropyl phosphate (1-amino-acetone-3-phosphate or AAP) to form pyridoxine 5'-phosphate (PNP) and inorganic phosphate. The protein is Pyridoxine 5'-phosphate synthase of Rhodopseudomonas palustris (strain TIE-1).